A 521-amino-acid polypeptide reads, in one-letter code: Ribonuclease Y 1 (521 aa).

A helical membrane pass occupies residues 1-21 (MEIVISAIIGLLIGGTVVFVI). Residues 51–87 (IKKESENKAKDFESRARKNVEQDIHKQKSTLKNKESQ) are disordered. Residues 211-271 (TVSVLALPND…VRRELARRTI (61 aa)) form the KH domain. The region spanning 337 to 430 (ALNQSLEVAT…VHAAYTLSSS (94 aa)) is the HD domain.

This sequence belongs to the RNase Y family.

It is found in the cell membrane. In terms of biological role, endoribonuclease that initiates mRNA decay. The polypeptide is Ribonuclease Y 1 (Bdellovibrio bacteriovorus (strain ATCC 15356 / DSM 50701 / NCIMB 9529 / HD100)).